The primary structure comprises 475 residues: Aspartyl/glutamyl-tRNA(Asn/Gln) amidotransferase subunit B (475 aa).

It belongs to the GatB/GatE family. GatB subfamily. In terms of assembly, heterotrimer of A, B and C subunits.

The catalysed reaction is L-glutamyl-tRNA(Gln) + L-glutamine + ATP + H2O = L-glutaminyl-tRNA(Gln) + L-glutamate + ADP + phosphate + H(+). It catalyses the reaction L-aspartyl-tRNA(Asn) + L-glutamine + ATP + H2O = L-asparaginyl-tRNA(Asn) + L-glutamate + ADP + phosphate + 2 H(+). In terms of biological role, allows the formation of correctly charged Asn-tRNA(Asn) or Gln-tRNA(Gln) through the transamidation of misacylated Asp-tRNA(Asn) or Glu-tRNA(Gln) in organisms which lack either or both of asparaginyl-tRNA or glutaminyl-tRNA synthetases. The reaction takes place in the presence of glutamine and ATP through an activated phospho-Asp-tRNA(Asn) or phospho-Glu-tRNA(Gln). The polypeptide is Aspartyl/glutamyl-tRNA(Asn/Gln) amidotransferase subunit B (Bacillus mycoides (strain KBAB4) (Bacillus weihenstephanensis)).